The following is a 515-amino-acid chain: Cytochrome P450 2D7 (515 aa).

The Extracellular portion of the chain corresponds to 1-2; that stretch reads MG. Residues 3 to 23 traverse the membrane as a helical segment; that stretch reads LEALVPLAMIVAIFLLLVDLM. Topologically, residues 24–301 are cytoplasmic; sequence HRHQRWAARY…DENLRIVVGN (278 aa). A helical transmembrane segment spans residues 302–322; that stretch reads LFLAGMVTTSTTLAWGLLLMI. Residues 323-515 lie on the Extracellular side of the membrane; sequence LHLDVQRGRR…SPYELCAVPR (193 aa). An N-linked (GlcNAc...) asparagine glycan is attached at asparagine 416. Residue cysteine 461 participates in heme binding.

Belongs to the cytochrome P450 family. Heme serves as cofactor. As to expression, expressed in brain cortex (at protein level).

The protein resides in the membrane. The protein localises to the cytoplasm. Its subcellular location is the mitochondrion. It carries out the reaction an organic molecule + reduced [NADPH--hemoprotein reductase] + O2 = an alcohol + oxidized [NADPH--hemoprotein reductase] + H2O + H(+). May be responsible for the metabolism of many drugs and environmental chemicals that it oxidizes. It may be involved in the metabolism of codeine to morphine. However, another study could not confirm it. The polypeptide is Cytochrome P450 2D7 (Homo sapiens (Human)).